The following is a 236-amino-acid chain: Small ribosomal subunit protein uS2c (236 aa).

This sequence belongs to the universal ribosomal protein uS2 family.

The protein resides in the plastid. It is found in the chloroplast. The polypeptide is Small ribosomal subunit protein uS2c (rps2) (Panax ginseng (Korean ginseng)).